Here is a 239-residue protein sequence, read N- to C-terminus: NADH-quinone oxidoreductase subunit I 1 (239 aa).

4Fe-4S ferredoxin-type domains follow at residues 81–111 and 123–152; these read LVPR…IEAA and AKFV…MDSG. Residues Cys91, Cys94, Cys97, Cys101, Cys132, Cys135, Cys138, and Cys142 each coordinate [4Fe-4S] cluster.

This sequence belongs to the complex I 23 kDa subunit family. As to quaternary structure, NDH-1 is composed of 14 different subunits. Subunits NuoA, H, J, K, L, M, N constitute the membrane sector of the complex. [4Fe-4S] cluster is required as a cofactor.

The protein localises to the cell inner membrane. It catalyses the reaction a quinone + NADH + 5 H(+)(in) = a quinol + NAD(+) + 4 H(+)(out). NDH-1 shuttles electrons from NADH, via FMN and iron-sulfur (Fe-S) centers, to quinones in the respiratory chain. The immediate electron acceptor for the enzyme in this species is believed to be ubiquinone. Couples the redox reaction to proton translocation (for every two electrons transferred, four hydrogen ions are translocated across the cytoplasmic membrane), and thus conserves the redox energy in a proton gradient. The chain is NADH-quinone oxidoreductase subunit I 1 from Anaeromyxobacter dehalogenans (strain 2CP-C).